The following is a 302-amino-acid chain: Glycine--tRNA ligase alpha subunit (302 aa).

It belongs to the class-II aminoacyl-tRNA synthetase family. Tetramer of two alpha and two beta subunits.

Its subcellular location is the cytoplasm. The enzyme catalyses tRNA(Gly) + glycine + ATP = glycyl-tRNA(Gly) + AMP + diphosphate. The protein is Glycine--tRNA ligase alpha subunit of Haemophilus influenzae (strain PittGG).